The chain runs to 167 residues: NADH-quinone oxidoreductase subunit B 2 (167 aa).

[4Fe-4S] cluster-binding residues include cysteine 38, cysteine 39, cysteine 103, and cysteine 132.

It belongs to the complex I 20 kDa subunit family. In terms of assembly, NDH-1 is composed of 14 different subunits. Subunits NuoB, C, D, E, F, and G constitute the peripheral sector of the complex. The cofactor is [4Fe-4S] cluster.

Its subcellular location is the cell inner membrane. The catalysed reaction is a quinone + NADH + 5 H(+)(in) = a quinol + NAD(+) + 4 H(+)(out). NDH-1 shuttles electrons from NADH, via FMN and iron-sulfur (Fe-S) centers, to quinones in the respiratory chain. The immediate electron acceptor for the enzyme in this species is believed to be ubiquinone. Couples the redox reaction to proton translocation (for every two electrons transferred, four hydrogen ions are translocated across the cytoplasmic membrane), and thus conserves the redox energy in a proton gradient. The sequence is that of NADH-quinone oxidoreductase subunit B 2 from Rhizobium meliloti (strain 1021) (Ensifer meliloti).